The sequence spans 29 residues: Dermaseptin-J9 (29 aa).

Expressed by the skin glands.

It localises to the secreted. Has antimicrobial activity. The chain is Dermaseptin-J9 from Phasmahyla jandaia (Jandaia leaf frog).